A 264-amino-acid polypeptide reads, in one-letter code: Thymidylate synthase (264 aa).

Arginine 21 is a binding site for dUMP. Histidine 51 serves as a coordination point for (6R)-5,10-methylene-5,6,7,8-tetrahydrofolate. Residue 126-127 (RR) participates in dUMP binding. The active-site Nucleophile is the cysteine 146. DUMP-binding positions include 166–169 (RSCD), asparagine 177, and 207–209 (HLY). Aspartate 169 contributes to the (6R)-5,10-methylene-5,6,7,8-tetrahydrofolate binding site. A (6R)-5,10-methylene-5,6,7,8-tetrahydrofolate-binding site is contributed by alanine 263.

Belongs to the thymidylate synthase family. Bacterial-type ThyA subfamily. As to quaternary structure, homodimer.

The protein localises to the cytoplasm. It catalyses the reaction dUMP + (6R)-5,10-methylene-5,6,7,8-tetrahydrofolate = 7,8-dihydrofolate + dTMP. It functions in the pathway pyrimidine metabolism; dTTP biosynthesis. Its function is as follows. Catalyzes the reductive methylation of 2'-deoxyuridine-5'-monophosphate (dUMP) to 2'-deoxythymidine-5'-monophosphate (dTMP) while utilizing 5,10-methylenetetrahydrofolate (mTHF) as the methyl donor and reductant in the reaction, yielding dihydrofolate (DHF) as a by-product. This enzymatic reaction provides an intracellular de novo source of dTMP, an essential precursor for DNA biosynthesis. The sequence is that of Thymidylate synthase from Baumannia cicadellinicola subsp. Homalodisca coagulata.